Reading from the N-terminus, the 495-residue chain is Omega-crystallin (495 aa).

The protein belongs to the aldehyde dehydrogenase family. Lens.

Omega-crystallins are structural components of squids and octopi eye lens. Contains relatively little if any DHAL activity. The protein is Omega-crystallin of Nototodarus sloanii (Wellington flying squid).